A 256-amino-acid chain; its full sequence is MKNLNLYHFFDCKDRKITMYRLTEKGERIRDMFSDIAPRYDFLNRLLSFGVDRRWRRNAVKCIRWSEGGRVLDVATGTGDVALEIARQTPPSVAIVGVDFSEGMVALGRDKVAGSPYAGRITMEIAPCEAIPFPDDTFDSVTIAFGIRNVVDRSQGLSEMLRVLKPGGRAVILEFSTPRSRLFKRIYSFYFLRVLPVIGGLFSQFGAYKYLPDSVLEFPSQEEFKALMASVGFRDTAHRDQTFGIATIYTGEKGLK.

2 residues coordinate S-adenosyl-L-methionine: T78 and D99.

The protein belongs to the class I-like SAM-binding methyltransferase superfamily. MenG/UbiE family.

The enzyme catalyses a 2-demethylmenaquinol + S-adenosyl-L-methionine = a menaquinol + S-adenosyl-L-homocysteine + H(+). It carries out the reaction a 2-methoxy-6-(all-trans-polyprenyl)benzene-1,4-diol + S-adenosyl-L-methionine = a 5-methoxy-2-methyl-3-(all-trans-polyprenyl)benzene-1,4-diol + S-adenosyl-L-homocysteine + H(+). It functions in the pathway quinol/quinone metabolism; menaquinone biosynthesis; menaquinol from 1,4-dihydroxy-2-naphthoate: step 2/2. The protein operates within cofactor biosynthesis; ubiquinone biosynthesis. Its function is as follows. Methyltransferase required for the conversion of demethylmenaquinol (DMKH2) to menaquinol (MKH2) and the conversion of 2-polyprenyl-6-methoxy-1,4-benzoquinol (DDMQH2) to 2-polyprenyl-3-methyl-6-methoxy-1,4-benzoquinol (DMQH2). The chain is Ubiquinone/menaquinone biosynthesis C-methyltransferase UbiE from Geobacter sulfurreducens (strain ATCC 51573 / DSM 12127 / PCA).